We begin with the raw amino-acid sequence, 605 residues long: MRIDQSIINEIKDKTDILDLVSEYVKLEKRGRNYIGLCPFHDEKTPSFTVSEDKQICHCFGCKKGGNVFQFTQEIKDISFVEAVKELGDRVNVAVDIEATQFNSNIQIASDDLQMIEMHELIQEFYYYALTKTVEGEQALTYLQERGFTDALIKERGIGFAPDSSHFCHDFLQKRGYDIELAYEAGLLSRNEENFSYYDRFRNRIMFPLKNAQGRIVGYSGRTYTGQEPKYLNSPETPIFQKRKLLYNLDKARKSIRKLDEIVLLEGFMDVIKSDTAGLKNVVATMGTQLSDEHITFIRKLTLNITLMFDGDFAGSEATLKTGQHLLQQGLNVFVIQLPSGMDPDEYIGKYGNDAFTAFVKNDKKSFAHYKVSILKDEIAHNDLSYERYLKELSHDISLMKSSILQQKALNDVAPFFNVSPEQLANEIQFNQAPANYYPDDEYGGYDEYGGYIEPEPIGMAQFDNLSRQEKAERAFLKHLMRDKDTFLNYYESVDKDNFTNQHFKYVFEVLHDFYAENDQYNISDAVQYVNSNELRETLISLEQYNLNDEPYENEIDDYVNVINEKGQETIESLNHKLREATRIGDVELQKYYLQQIVAKNKERM.

Residues 38–62 (CPFHDEKTPSFTVSEDKQICHCFGC) form a CHC2-type zinc finger. The region spanning 260–341 (DEIVLLEGFM…NVFVIQLPSG (82 aa)) is the Toprim domain. Mg(2+) is bound by residues E266, D310, and D312.

This sequence belongs to the DnaG primase family. As to quaternary structure, monomer. Interacts with DnaB. The cofactor is Zn(2+). It depends on Mg(2+) as a cofactor.

It catalyses the reaction ssDNA + n NTP = ssDNA/pppN(pN)n-1 hybrid + (n-1) diphosphate.. Its function is as follows. RNA polymerase that catalyzes the synthesis of short RNA molecules used as primers for DNA polymerase during DNA replication. The protein is DNA primase of Staphylococcus aureus (strain MSSA476).